Here is a 1025-residue protein sequence, read N- to C-terminus: Dihydropyrimidine dehydrogenase [NADP(+)] (1025 aa).

The region spanning 69–100 is the 4Fe-4S ferredoxin-type 1 domain; it reads ERGALREAVRCLKCADAPCQKSCPTSLDIKSF. 4 residues coordinate [4Fe-4S] cluster: Cys-79, Cys-82, Cys-87, and Cys-91. FAD is bound at residue Val-129. Positions 130, 136, 140, and 156 each coordinate [4Fe-4S] cluster. FAD contacts are provided by residues 194–198, 218–226, and Arg-235; these read GAGPA and EKQEYVGGL. Residues 340-343, 364-365, and Arg-371 each bind NADP(+); these read AGDT and RK. Lys-384 carries the post-translational modification N6-acetyllysine. Residues 437–439 and 481–487 contribute to the NADP(+) site; these read PFG and DVVGMAN. 480 to 489 serves as a coordination point for FAD; that stretch reads GDVVGMANTT. FMN-binding positions include Ser-550 and 574–575; that span reads KT. Substrate-binding positions include Asn-609 and 668 to 670; that span reads NLS. Catalysis depends on Cys-671, which acts as the Proton acceptor. Lys-709 provides a ligand contact to FMN. 736–737 is a binding site for substrate; the sequence is NT. FMN-binding positions include Gly-767, 793–795, and 816–817; these read TGG and CS. A Phosphoserine modification is found at Ser-905. 2 4Fe-4S ferredoxin-type domains span residues 944–976 and 978–1007; these read VVALIDEEMCINCGKCYMTCNDSGYQAIQFDPE and HLPTVSDTCTGCTLCLSVCPIMDCIRMVSR. Residues Cys-953, Cys-956, Cys-959, Cys-963, Cys-986, Cys-989, Cys-992, and Cys-996 each contribute to the [4Fe-4S] cluster site.

It belongs to the dihydropyrimidine dehydrogenase family. Homodimer. FAD is required as a cofactor. FMN serves as cofactor. It depends on [4Fe-4S] cluster as a cofactor.

The protein localises to the cytoplasm. It catalyses the reaction 5,6-dihydrouracil + NADP(+) = uracil + NADPH + H(+). It carries out the reaction 5,6-dihydrothymine + NADP(+) = thymine + NADPH + H(+). It functions in the pathway amino-acid biosynthesis; beta-alanine biosynthesis. Its activity is regulated as follows. Inactivated by 5-iodouracil. Functionally, involved in pyrimidine base degradation. Catalyzes the reduction of uracil and thymine. Also involved the degradation of the chemotherapeutic drug 5-fluorouracil. The chain is Dihydropyrimidine dehydrogenase [NADP(+)] from Rattus norvegicus (Rat).